We begin with the raw amino-acid sequence, 161 residues long: Gamma-glutamylaminecyclotransferase A (161 aa).

Position 26-29 (26-29) interacts with substrate; that stretch reads YGTL. E101 acts as the Proton acceptor in catalysis.

This sequence belongs to the gamma-glutamylcyclotransferase family.

The enzyme catalyses epsilon-(gamma-L-glutamyl)-L-lysine = 5-oxo-L-proline + L-lysine. Functionally, may contribute to degradation of proteins cross-linked by transglutaminases by degrading the cross-link between a lysine and a glutamic acid residue. Catalyzes the formation of 5-oxo-L-proline from L-gamma-glutamyl-L-epsilon-lysine. The chain is Gamma-glutamylaminecyclotransferase A (ggact.1) from Danio rerio (Zebrafish).